A 107-amino-acid polypeptide reads, in one-letter code: Phosphoribosyl-ATP pyrophosphatase (107 aa).

This sequence belongs to the PRA-PH family.

The protein localises to the cytoplasm. It carries out the reaction 1-(5-phospho-beta-D-ribosyl)-ATP + H2O = 1-(5-phospho-beta-D-ribosyl)-5'-AMP + diphosphate + H(+). Its pathway is amino-acid biosynthesis; L-histidine biosynthesis; L-histidine from 5-phospho-alpha-D-ribose 1-diphosphate: step 2/9. The chain is Phosphoribosyl-ATP pyrophosphatase from Methylobacterium nodulans (strain LMG 21967 / CNCM I-2342 / ORS 2060).